The primary structure comprises 194 residues: Accessory gene regulator protein B (194 aa).

Helical transmembrane passes span 44 to 64 (IVVY…LTHL), 80 to 100 (SSLL…YLII), 107 to 127 (FVLL…APAA), 142 to 162 (KILS…TKEP), and 163 to 183 (VNKL…PIFF).

The protein belongs to the AgrB family.

Its subcellular location is the cell membrane. Functionally, essential for the production of a quorum sensing system signal molecule, the autoinducing peptide (AIP). This quorum sensing system is responsible for the regulation of the expression of virulence factor genes. Involved in the proteolytic processing of AgrD, the precursor of AIP. The protein is Accessory gene regulator protein B of Staphylococcus epidermidis.